The primary structure comprises 256 residues: Homeobox-leucine zipper protein HOX28 (256 aa).

Positions 56 to 86 are disordered; sequence ACSPGSPVSSGSGKRGSGSGSGDEVDDAGCD. Low complexity predominate over residues 58–67; the sequence is SPGSPVSSGS. The homeobox DNA-binding region spans 91-150; it reads GARKKLRLSKDQAAVLEECFKTHHTLTPKQKVALAKSLNLRPRQVEVWFQNRRARTKLKQ. The leucine-zipper stretch occupies residues 149–193; sequence KQTEVDCEHLKRWCDQLADDNRRLHKELAELRALKATPTPPAAAP.

It belongs to the HD-ZIP homeobox family. Class II subfamily. As to expression, expressed in seedlings, roots, stems and panicles.

The protein resides in the nucleus. In terms of biological role, probable transcription factor. The chain is Homeobox-leucine zipper protein HOX28 (HOX28) from Oryza sativa subsp. indica (Rice).